Consider the following 90-residue polypeptide: Large ribosomal subunit protein bL27 (90 aa).

Residues 1–22 (MAHKKAGGSTRNGRDSNPKMLG) are disordered.

It belongs to the bacterial ribosomal protein bL27 family.

This chain is Large ribosomal subunit protein bL27, found in Coxiella burnetii (strain Dugway 5J108-111).